Reading from the N-terminus, the 150-residue chain is UPF0506 protein SJCHGC09643 (150 aa).

Positions 1 to 18 are cleaved as a signal peptide; that stretch reads MNTCIQLLILCLVTVINS. 4 N-linked (GlcNAc...) asparagine glycosylation sites follow: asparagine 20, asparagine 32, asparagine 48, and asparagine 110. Disulfide bonds link cysteine 116–cysteine 130, cysteine 123–cysteine 134, and cysteine 129–cysteine 139.

Belongs to the UPF0506 family.

It localises to the secreted. The sequence is that of UPF0506 protein SJCHGC09643 from Schistosoma japonicum (Blood fluke).